An 800-amino-acid chain; its full sequence is Phenylalanine--tRNA ligase beta subunit (800 aa).

The 110-residue stretch at 38 to 147 folds into the tRNA-binding domain; that stretch reads GAELKGVVAA…PGTVPGTPIG (110 aa). In terms of domain architecture, B5 spans 401-477; that stretch reads VASPEVRMRW…RTLGYDAIPE (77 aa). Aspartate 455, aspartate 461, glutamate 464, and glutamate 465 together coordinate Mg(2+). In terms of domain architecture, FDX-ACB spans 708–799; that stretch reads PRLPAVLRDV…LRERVGAELR (92 aa).

It belongs to the phenylalanyl-tRNA synthetase beta subunit family. Type 1 subfamily. As to quaternary structure, tetramer of two alpha and two beta subunits. Mg(2+) is required as a cofactor.

It is found in the cytoplasm. The catalysed reaction is tRNA(Phe) + L-phenylalanine + ATP = L-phenylalanyl-tRNA(Phe) + AMP + diphosphate + H(+). The chain is Phenylalanine--tRNA ligase beta subunit from Anaeromyxobacter dehalogenans (strain 2CP-C).